The primary structure comprises 246 residues: MAGHSQFSNIKHRKGAQDAKRSQKFTKLIREITVAAKQGLPDPELNPRLRSAIFAARKENLPKDKIETAIKNATGNVAGENYEEIQYEGHGPSGTALIVHALTNNRNRTASEVRYIFSRKGGNLGETGSVSYLFDHVGLIVYKAEGVNFDDLFSHGIELEVLNVEENDKEGLHVITCEIKDFGKVRDAFYAKFGEPELARLSWQPKDLIEISDKELIDKLSALVEELEDNDDVQYVEGNFTFVDKL.

The segment at 1–22 is disordered; sequence MAGHSQFSNIKHRKGAQDAKRS.

Belongs to the TACO1 family.

The protein resides in the cytoplasm. The chain is Probable transcriptional regulatory protein WRi_002620 from Wolbachia sp. subsp. Drosophila simulans (strain wRi).